The sequence spans 222 residues: Thiopurine S-methyltransferase (222 aa).

The S-adenosyl-L-methionine site is built by W10, L45, E66, and R123.

The protein belongs to the class I-like SAM-binding methyltransferase superfamily. TPMT family.

The protein localises to the cytoplasm. It carries out the reaction S-adenosyl-L-methionine + a thiopurine = S-adenosyl-L-homocysteine + a thiopurine S-methylether.. The protein is Thiopurine S-methyltransferase of Pseudomonas fluorescens (strain ATCC BAA-477 / NRRL B-23932 / Pf-5).